The chain runs to 897 residues: Beta-galactosidase (897 aa).

Catalysis depends on Glu-459, which acts as the Proton donor. The active-site Nucleophile is Glu-525.

This sequence belongs to the glycosyl hydrolase 2 family.

The enzyme catalyses Hydrolysis of terminal non-reducing beta-D-galactose residues in beta-D-galactosides.. This Clostridium acetobutylicum protein is Beta-galactosidase (cbgA).